The sequence spans 147 residues: Large ribosomal subunit protein bL21 (147 aa).

A disordered region spans residues 125-147 (EEVEAAPKAKKAAPKAKKEATKE).

It belongs to the bacterial ribosomal protein bL21 family. Part of the 50S ribosomal subunit. Contacts protein L20.

In terms of biological role, this protein binds to 23S rRNA in the presence of protein L20. This chain is Large ribosomal subunit protein bL21, found in Flavobacterium johnsoniae (strain ATCC 17061 / DSM 2064 / JCM 8514 / BCRC 14874 / CCUG 350202 / NBRC 14942 / NCIMB 11054 / UW101) (Cytophaga johnsonae).